A 590-amino-acid polypeptide reads, in one-letter code: Potassium-transporting ATPase potassium-binding subunit (590 aa).

Helical transmembrane passes span 3-23, 63-83, 134-154, 177-197, 284-304, 312-332, 359-379, 388-408, 411-431, 451-471, 515-535, and 558-578; these read AFLL…KPLG, HYAL…YALQ, GLAV…IALI, VYVL…QGVI, FVQM…FGGM, WAVL…LAWA, FGIV…CGAV, ALGG…FGGV, GLYG…LMIG, IAIL…VVVT, LALG…VLAM, and LFVV…YIPA.

Belongs to the KdpA family. In terms of assembly, the system is composed of three essential subunits: KdpA, KdpB and KdpC.

It is found in the cell inner membrane. Functionally, part of the high-affinity ATP-driven potassium transport (or Kdp) system, which catalyzes the hydrolysis of ATP coupled with the electrogenic transport of potassium into the cytoplasm. This subunit binds the periplasmic potassium ions and delivers the ions to the membrane domain of KdpB through an intramembrane tunnel. The chain is Potassium-transporting ATPase potassium-binding subunit from Ralstonia pickettii (strain 12J).